The primary structure comprises 153 residues: Aspartate carbamoyltransferase regulatory chain (153 aa).

4 residues coordinate Zn(2+): Cys109, Cys114, Cys138, and Cys141.

It belongs to the PyrI family. In terms of assembly, contains catalytic and regulatory chains. Zn(2+) serves as cofactor.

Involved in allosteric regulation of aspartate carbamoyltransferase. This chain is Aspartate carbamoyltransferase regulatory chain, found in Salmonella schwarzengrund (strain CVM19633).